We begin with the raw amino-acid sequence, 297 residues long: Formylmethanofuran--tetrahydromethanopterin formyltransferase (297 aa).

This sequence belongs to the FTR family. As to quaternary structure, homotetramer.

The protein resides in the cytoplasm. The enzyme catalyses N-formylmethanofuran + 5,6,7,8-tetrahydromethanopterin + H(+) = N(5)-formyl-5,6,7,8-tetrahydromethanopterin + methanofuran. Its pathway is one-carbon metabolism; methanogenesis from CO(2); 5,10-methenyl-5,6,7,8-tetrahydromethanopterin from CO(2): step 2/3. Its function is as follows. Catalyzes the reversible transfer of a formyl group from formylmethanofuran (formyl-MFR) to tetrahydromethanopterin (H(4)MPT) to produce 5-formyl tetrahydromethanopterin (5-formyl-H(4)MPT) and methanofuran (MFR). The chain is Formylmethanofuran--tetrahydromethanopterin formyltransferase from Methanosarcina acetivorans (strain ATCC 35395 / DSM 2834 / JCM 12185 / C2A).